Consider the following 331-residue polypeptide: 6-phosphogluconolactonase (331 aa).

Residue lysine 287 is modified to N6-acetyllysine.

The protein belongs to the cycloisomerase 2 family.

It catalyses the reaction 6-phospho-D-glucono-1,5-lactone + H2O = 6-phospho-D-gluconate + H(+). It functions in the pathway carbohydrate degradation; pentose phosphate pathway; D-ribulose 5-phosphate from D-glucose 6-phosphate (oxidative stage): step 2/3. Functionally, catalyzes the hydrolysis of 6-phosphogluconolactone to 6-phosphogluconate. The sequence is that of 6-phosphogluconolactonase from Escherichia coli O8 (strain IAI1).